Here is a 178-residue protein sequence, read N- to C-terminus: Endothelin-2 (178 aa).

An N-terminal signal peptide occupies residues 1–24 (MVSVPTTWCSVALALLVALHEGKG). Positions 25 to 46 (QAAATLEQPASSSHAQGTHLRL) are excised as a propeptide. Intrachain disulfides connect Cys-49-Cys-63 and Cys-51-Cys-59. The propeptide occupies 70–178 (VNTPEQTAPY…RSTHSRWRKR (109 aa)). Residues 96 to 111 (CQCSSARDPACATFCL) form an endothelin-like region. The disordered stretch occupies residues 159-178 (KRQQEAMREPRSTHSRWRKR). Basic and acidic residues predominate over residues 160-170 (RQQEAMREPRS).

It belongs to the endothelin/sarafotoxin family. Expressed in lung, but not in placental stem villi vessels or cultured placental villi smooth muscle cells.

Its subcellular location is the secreted. Functionally, endothelins are endothelium-derived vasoconstrictor peptides. The sequence is that of Endothelin-2 (EDN2) from Homo sapiens (Human).